Reading from the N-terminus, the 103-residue chain is Probable protease inhibitor Egf0.4b (103 aa).

An N-terminal signal peptide occupies residues methionine 1–threonine 22. A TIL domain is found at cysteine 35–cysteine 87.

The protein belongs to the polydnaviridae EGF-like motif protein family.

This is Probable protease inhibitor Egf0.4b (O11) from Microplitis demolitor bracovirus (isolate Webb) (MdBV).